Consider the following 362-residue polypeptide: Major capsid protein VP1 (362 aa).

The disordered stretch occupies residues 1–21; the sequence is MAPTKRKGSCPGAAPKKPKEP. The Bipartite nuclear localization signal motif lies at 5–19; sequence KRKGSCPGAAPKKPK. The C-terminal arm stretch occupies residues 302–362; it reads ISFLLSDLIN…EFGQTTTRMQ (61 aa). Position 338 is a phosphothreonine; by host (Thr338).

The protein belongs to the polyomaviruses coat protein VP1 family. In terms of assembly, homomultimer; disulfide-linked. The virus capsid is composed of 72 icosahedral units, each one composed of five disulfide-linked copies of VP1. Interacts with agnoprotein. Interacts with minor capsid proteins VP2 and VP3. Interacts with host HSPA8; this interaction probably participates in virus assembly. Interacts with host SP1; this interaction enhances the efficiency of viral packaging.

Its subcellular location is the virion. It localises to the host nucleus. It is found in the host endoplasmic reticulum. Functionally, forms an icosahedral capsid with a T=7 symmetry and a 40 nm diameter. The capsid is composed of 72 pentamers linked to each other by disulfide bonds and associated with VP2 or VP3 proteins. Binds to N-glycolylneuraminic analog of the ganglioside GM1 on the cell surface to provide virion attachment to target cell. Once attached, the virion is internalized by caveolin-mediated endocytosis and traffics to the endoplasmic reticulum. Inside the endoplasmic reticulum, the protein folding machinery isomerizes VP1 interpentamer disulfide bonds, thereby triggering initial uncoating. Next, the virion uses the endoplasmic reticulum-associated degradation machinery to probably translocate in the cytosol before reaching the nucleus. Nuclear entry of the viral DNA involves the selective exposure and importin recognition of VP2/Vp3 nuclear localization signal. The assembly takes place in the cell nucleus. Encapsulates the genomic DNA and participates in rearranging nucleosomes around the viral DNA. The viral progenies exit the cells by lytic release. This chain is Major capsid protein VP1, found in Macaca (macaques).